Consider the following 396-residue polypeptide: S-adenosylmethionine synthase 3 (396 aa).

Glu13 is a Mg(2+) binding site. Residue His19 coordinates ATP. A K(+)-binding site is contributed by Glu47. Residues Glu60 and Gln103 each contribute to the L-methionine site. ATP is bound by residues 171–173 (DGK), 239–242 (SGRF), Asp250, 256–257 (RK), Ala273, Lys277, and Lys281. Residue Asp250 coordinates L-methionine. L-methionine is bound at residue Lys281.

This sequence belongs to the AdoMet synthase family. In terms of assembly, homotetramer. It depends on Mn(2+) as a cofactor. Mg(2+) is required as a cofactor. The cofactor is Co(2+). K(+) serves as cofactor. In terms of tissue distribution, expressed in roots, stems and leaves (at protein level).

The protein localises to the cytoplasm. The catalysed reaction is L-methionine + ATP + H2O = S-adenosyl-L-methionine + phosphate + diphosphate. It functions in the pathway amino-acid biosynthesis; S-adenosyl-L-methionine biosynthesis; S-adenosyl-L-methionine from L-methionine: step 1/1. Functionally, catalyzes the formation of S-adenosylmethionine from methionine and ATP. The reaction comprises two steps that are both catalyzed by the same enzyme: formation of S-adenosylmethionine (AdoMet) and triphosphate, and subsequent hydrolysis of the triphosphate. May be involved in the synthesis of betain in response to abiotic stress such as high salinity. The chain is S-adenosylmethionine synthase 3 (SAMS3) from Atriplex nummularia (Old man saltbush).